The chain runs to 277 residues: Thymidylate synthase (277 aa).

Arg-21 provides a ligand contact to dUMP. Residue His-51 participates in (6R)-5,10-methylene-5,6,7,8-tetrahydrofolate binding. 126–127 lines the dUMP pocket; that stretch reads RR. The active-site Nucleophile is the Cys-159. DUMP contacts are provided by residues 179-182, Asn-190, and 220-222; these read RSAD and HLY. Asp-182 is a binding site for (6R)-5,10-methylene-5,6,7,8-tetrahydrofolate. A (6R)-5,10-methylene-5,6,7,8-tetrahydrofolate-binding site is contributed by Ser-276.

This sequence belongs to the thymidylate synthase family. Bacterial-type ThyA subfamily. As to quaternary structure, homodimer.

It localises to the cytoplasm. The enzyme catalyses dUMP + (6R)-5,10-methylene-5,6,7,8-tetrahydrofolate = 7,8-dihydrofolate + dTMP. It functions in the pathway pyrimidine metabolism; dTTP biosynthesis. Its function is as follows. Catalyzes the reductive methylation of 2'-deoxyuridine-5'-monophosphate (dUMP) to 2'-deoxythymidine-5'-monophosphate (dTMP) while utilizing 5,10-methylenetetrahydrofolate (mTHF) as the methyl donor and reductant in the reaction, yielding dihydrofolate (DHF) as a by-product. This enzymatic reaction provides an intracellular de novo source of dTMP, an essential precursor for DNA biosynthesis. The polypeptide is Thymidylate synthase (Saccharophagus degradans (strain 2-40 / ATCC 43961 / DSM 17024)).